A 630-amino-acid polypeptide reads, in one-letter code: Chaperone protein HtpG (630 aa).

The tract at residues 1 to 341 (MTQNATSETL…SADLPLNVSR (341 aa)) is a; substrate-binding. Residues 342–558 (EILQESRDVR…QNDLSPHLLR (217 aa)) are b. The c stretch occupies residues 559-630 (MLKAAGQEVP…KRLNALLLKV (72 aa)).

It belongs to the heat shock protein 90 family. In terms of assembly, homodimer.

The protein localises to the cytoplasm. Its function is as follows. Molecular chaperone. Has ATPase activity. This Bordetella avium (strain 197N) protein is Chaperone protein HtpG.